The chain runs to 115 residues: NADH-ubiquinone oxidoreductase chain 3 (115 aa).

A run of 3 helical transmembrane segments spans residues 5-25 (TALL…FWFF), 55-75 (FFLV…LLPL), and 86-106 (IMML…AYEW).

The protein belongs to the complex I subunit 3 family. As to quaternary structure, core subunit of respiratory chain NADH dehydrogenase (Complex I) which is composed of 45 different subunits. Interacts with TMEM186. Interacts with TMEM242.

Its subcellular location is the mitochondrion inner membrane. The catalysed reaction is a ubiquinone + NADH + 5 H(+)(in) = a ubiquinol + NAD(+) + 4 H(+)(out). Functionally, core subunit of the mitochondrial membrane respiratory chain NADH dehydrogenase (Complex I) which catalyzes electron transfer from NADH through the respiratory chain, using ubiquinone as an electron acceptor. Essential for the catalytic activity of complex I. In Peromyscus sejugis (Santa Cruz mouse), this protein is NADH-ubiquinone oxidoreductase chain 3.